Here is a 303-residue protein sequence, read N- to C-terminus: Ribosomal protein L11 methyltransferase (303 aa).

Residues threonine 144, glycine 165, aspartate 187, and asparagine 235 each coordinate S-adenosyl-L-methionine.

The protein belongs to the methyltransferase superfamily. PrmA family.

The protein resides in the cytoplasm. It carries out the reaction L-lysyl-[protein] + 3 S-adenosyl-L-methionine = N(6),N(6),N(6)-trimethyl-L-lysyl-[protein] + 3 S-adenosyl-L-homocysteine + 3 H(+). Its function is as follows. Methylates ribosomal protein L11. This chain is Ribosomal protein L11 methyltransferase, found in Prochlorococcus marinus (strain AS9601).